Reading from the N-terminus, the 366-residue chain is Aminomethyltransferase (366 aa).

It belongs to the GcvT family. The glycine cleavage system is composed of four proteins: P, T, L and H.

It catalyses the reaction N(6)-[(R)-S(8)-aminomethyldihydrolipoyl]-L-lysyl-[protein] + (6S)-5,6,7,8-tetrahydrofolate = N(6)-[(R)-dihydrolipoyl]-L-lysyl-[protein] + (6R)-5,10-methylene-5,6,7,8-tetrahydrofolate + NH4(+). The glycine cleavage system catalyzes the degradation of glycine. This chain is Aminomethyltransferase, found in Bacillus cereus (strain ATCC 10987 / NRS 248).